Reading from the N-terminus, the 256-residue chain is Thiazole synthase (256 aa).

The active-site Schiff-base intermediate with DXP is Lys96. Residues Gly157, 184–185 (AG), and 206–207 (NT) contribute to the 1-deoxy-D-xylulose 5-phosphate site.

This sequence belongs to the ThiG family. Homotetramer. Forms heterodimers with either ThiH or ThiS.

The protein localises to the cytoplasm. The catalysed reaction is [ThiS sulfur-carrier protein]-C-terminal-Gly-aminoethanethioate + 2-iminoacetate + 1-deoxy-D-xylulose 5-phosphate = [ThiS sulfur-carrier protein]-C-terminal Gly-Gly + 2-[(2R,5Z)-2-carboxy-4-methylthiazol-5(2H)-ylidene]ethyl phosphate + 2 H2O + H(+). Its pathway is cofactor biosynthesis; thiamine diphosphate biosynthesis. Its function is as follows. Catalyzes the rearrangement of 1-deoxy-D-xylulose 5-phosphate (DXP) to produce the thiazole phosphate moiety of thiamine. Sulfur is provided by the thiocarboxylate moiety of the carrier protein ThiS. In vitro, sulfur can be provided by H(2)S. This is Thiazole synthase from Bartonella tribocorum (strain CIP 105476 / IBS 506).